The following is a 662-amino-acid chain: DNA ligase (662 aa).

NAD(+) is bound by residues 31–35, 80–81, and Glu-109; these read DYEYD and SL. Lys-111 acts as the N6-AMP-lysine intermediate in catalysis. 4 residues coordinate NAD(+): Arg-132, Glu-166, Lys-282, and Lys-306. Zn(2+) is bound by residues Cys-400, Cys-403, Cys-418, and Cys-423. The region spanning 581–662 is the BRCT domain; it reads KVNNIFEGKT…FEEMLKGENI (82 aa).

The protein belongs to the NAD-dependent DNA ligase family. LigA subfamily. Mg(2+) is required as a cofactor. Requires Mn(2+) as cofactor.

The catalysed reaction is NAD(+) + (deoxyribonucleotide)n-3'-hydroxyl + 5'-phospho-(deoxyribonucleotide)m = (deoxyribonucleotide)n+m + AMP + beta-nicotinamide D-nucleotide.. DNA ligase that catalyzes the formation of phosphodiester linkages between 5'-phosphoryl and 3'-hydroxyl groups in double-stranded DNA using NAD as a coenzyme and as the energy source for the reaction. It is essential for DNA replication and repair of damaged DNA. The polypeptide is DNA ligase (Thermoanaerobacter pseudethanolicus (strain ATCC 33223 / 39E) (Clostridium thermohydrosulfuricum)).